The primary structure comprises 397 residues: Purine ribonucleoside efflux pump NepI (397 aa).

The Cytoplasmic segment spans residues 1–21 (MNENIAEKFRADGVARPNWSA). Residues 22-42 (VFAVAFCVACLITVEFLPVSL) traverse the membrane as a helical segment. At 43–54 (LTPMAQDLGISE) the chain is on the periplasmic side. Residues 55–75 (GVAGQSVTVTAFVAMFSSLFI) form a helical membrane-spanning segment. The Cytoplasmic portion of the chain corresponds to 76-85 (TQIIQATDRR). The chain crosses the membrane as a helical span at residues 86–106 (YIVILFAVLLTASCLMVSFAN). A topological domain (periplasmic) is located at residue Ser-107. Residues 108–128 (FTLLLLGRACLGLALGGFWAM) form a helical membrane-spanning segment. Residues 129–147 (SASLTMRLVPARTVPKALS) lie on the Cytoplasmic side of the membrane. A helical membrane pass occupies residues 148-168 (VIFGAVSIALVIAAPLGSFLG). Residues 169–175 (GIIGWRN) are Periplasmic-facing. Residues 176–196 (VFNAAAVMGVLCVIWVVKSLP) traverse the membrane as a helical segment. Residues 197–215 (SLPGEPSHQKQNMFSLLQR) lie on the Cytoplasmic side of the membrane. A helical membrane pass occupies residues 216–236 (PGVMAGMIAIFMSFAGQFAFF). Residues 237–255 (TYIRPVYMNLAGFDVDGLT) lie on the Periplasmic side of the membrane. Residues 256–276 (LVLLSFGIASFVGTSFSSYVL) form a helical membrane-spanning segment. Topologically, residues 277–281 (KRSVK) are cytoplasmic. The chain crosses the membrane as a helical span at residues 282 to 302 (LALAGAPLLLALSALTLIVWG). At 303 to 305 (SDK) the chain is on the periplasmic side. The helical transmembrane segment at 306–326 (TVAAVIAIIWGLAFALVPVGW) threads the bilayer. Residues 327–343 (STWITRSLADQAEKAGS) are Cytoplasmic-facing. A helical transmembrane segment spans residues 344–364 (IQVAVIQLANTCGAAVGGYAL). The Periplasmic segment spans residues 365-366 (DN). A helical membrane pass occupies residues 367–387 (FGLLSPLALSGGLMLLTALVV). The Cytoplasmic portion of the chain corresponds to 388–397 (AAKVRITPMS).

It belongs to the major facilitator superfamily. DHA1 family. NepI (TC 2.A.1.2.26) subfamily.

Its subcellular location is the cell inner membrane. It carries out the reaction inosine(in) + H(+)(out) = inosine(out) + H(+)(in). It catalyses the reaction guanosine(in) + H(+)(out) = guanosine(out) + H(+)(in). Involved in the efflux of purine ribonucleosides, such as inosine and guanosine. This chain is Purine ribonucleoside efflux pump NepI, found in Salmonella paratyphi B (strain ATCC BAA-1250 / SPB7).